A 267-amino-acid polypeptide reads, in one-letter code: DCN1-like protein 2 (267 aa).

The interval 1–48 (MTRKYTKKSSGSTASTTNSTAEIVDLTTSTSSVGKKRKSPDEKAQPIT) is disordered. The span at 8-21 (KSSGSTASTTNSTA) shows a compositional bias: low complexity. The 188-residue stretch at 75–262 (HYTYLYTYIF…LLDQFSEWVQ (188 aa)) folds into the DCUN1 domain.

The polypeptide is DCN1-like protein 2 (Dictyostelium discoideum (Social amoeba)).